Here is a 137-residue protein sequence, read N- to C-terminus: Putative nucleoside diphosphate kinase (137 aa).

ATP is bound by residues Phe-45, Arg-73, Thr-79, Arg-90, and Asn-100. The Pros-phosphohistidine intermediate role is filled by His-103.

This sequence belongs to the NDK family. It depends on Mg(2+) as a cofactor.

It catalyses the reaction a 2'-deoxyribonucleoside 5'-diphosphate + ATP = a 2'-deoxyribonucleoside 5'-triphosphate + ADP. The catalysed reaction is a ribonucleoside 5'-diphosphate + ATP = a ribonucleoside 5'-triphosphate + ADP. Its function is as follows. Major role in the synthesis of nucleoside triphosphates other than ATP. The ATP gamma phosphate is transferred to the NDP beta phosphate via a ping-pong mechanism, using a phosphorylated active-site intermediate. This chain is Putative nucleoside diphosphate kinase (NME2P1), found in Homo sapiens (Human).